The sequence spans 31 residues: Toxin BmKK16 (31 aa).

Gln-1 carries the post-translational modification Pyrrolidone carboxylic acid. Disulfide bonds link Cys-4-Cys-20, Cys-10-Cys-25, and Cys-14-Cys-27. Position 31 is a proline amide (Pro-31).

The protein belongs to the short scorpion toxin superfamily. Potassium channel inhibitor family. Alpha-KTx 17 subfamily. The N-terminus is blocked. In terms of tissue distribution, expressed by the venom gland.

The protein localises to the secreted. Its function is as follows. Blocker of potassium channels (Kv). The protein is Toxin BmKK16 of Olivierus martensii (Manchurian scorpion).